Reading from the N-terminus, the 453-residue chain is Ribosomal protein uS12 methylthiotransferase RimO (453 aa).

The region spanning 4-120 (TSVHIVSLGC…IADHLRVLME (117 aa)) is the MTTase N-terminal domain. Positions 13, 49, 83, 161, 165, and 168 each coordinate [4Fe-4S] cluster. In terms of domain architecture, Radical SAM core spans 147 to 377 (STPPYSAYLK…MEEQAVISHE (231 aa)). Positions 380 to 450 (QTLVGSLQEV…DYDLFAEVIS (71 aa)) constitute a TRAM domain.

It belongs to the methylthiotransferase family. RimO subfamily. [4Fe-4S] cluster serves as cofactor.

The protein resides in the cytoplasm. It carries out the reaction L-aspartate(89)-[ribosomal protein uS12]-hydrogen + (sulfur carrier)-SH + AH2 + 2 S-adenosyl-L-methionine = 3-methylsulfanyl-L-aspartate(89)-[ribosomal protein uS12]-hydrogen + (sulfur carrier)-H + 5'-deoxyadenosine + L-methionine + A + S-adenosyl-L-homocysteine + 2 H(+). Its function is as follows. Catalyzes the methylthiolation of an aspartic acid residue of ribosomal protein uS12. The chain is Ribosomal protein uS12 methylthiotransferase RimO from Syntrophus aciditrophicus (strain SB).